A 28-amino-acid polypeptide reads, in one-letter code: Flagellar filament 34 kDa core protein (28 aa).

The protein belongs to the bacterial flagellin family. In terms of assembly, the flagellum consists of an outer layer composed of repeating units of FlaA around a core that contains several antigenically related polypeptides.

It is found in the periplasmic flagellum. The protein localises to the periplasm. Component of the core of the flagella. This chain is Flagellar filament 34 kDa core protein, found in Treponema phagedenis.